The following is a 90-amino-acid chain: Small ribosomal subunit protein bS16 (90 aa).

This sequence belongs to the bacterial ribosomal protein bS16 family.

The protein is Small ribosomal subunit protein bS16 of Lactobacillus gasseri (strain ATCC 33323 / DSM 20243 / BCRC 14619 / CIP 102991 / JCM 1131 / KCTC 3163 / NCIMB 11718 / NCTC 13722 / AM63).